The primary structure comprises 346 residues: Ribonucleoside-diphosphate reductase subunit beta (346 aa).

3 residues coordinate Fe cation: Glu-89, Glu-120, and His-123. Residue Tyr-129 is part of the active site. Residues Glu-193, Glu-227, and His-230 each contribute to the Fe cation site.

The protein belongs to the ribonucleoside diphosphate reductase small chain family. In terms of assembly, tetramer of two alpha and two beta subunits. Fe cation serves as cofactor.

It carries out the reaction a 2'-deoxyribonucleoside 5'-diphosphate + [thioredoxin]-disulfide + H2O = a ribonucleoside 5'-diphosphate + [thioredoxin]-dithiol. Functionally, provides the precursors necessary for DNA synthesis. Catalyzes the biosynthesis of deoxyribonucleotides from the corresponding ribonucleotides. The protein is Ribonucleoside-diphosphate reductase subunit beta (nrdB) of Chlamydia pneumoniae (Chlamydophila pneumoniae).